We begin with the raw amino-acid sequence, 435 residues long: Glutamyl-tRNA reductase (435 aa).

Substrate contacts are provided by residues Thr49 to Arg52, Ser109, Glu114 to Gln116, and Gln120. Cys50 serves as the catalytic Nucleophile. Gly189–Ser194 lines the NADP(+) pocket.

This sequence belongs to the glutamyl-tRNA reductase family. Homodimer.

The catalysed reaction is (S)-4-amino-5-oxopentanoate + tRNA(Glu) + NADP(+) = L-glutamyl-tRNA(Glu) + NADPH + H(+). It participates in porphyrin-containing compound metabolism; protoporphyrin-IX biosynthesis; 5-aminolevulinate from L-glutamyl-tRNA(Glu): step 1/2. Functionally, catalyzes the NADPH-dependent reduction of glutamyl-tRNA(Glu) to glutamate 1-semialdehyde (GSA). This chain is Glutamyl-tRNA reductase, found in Listeria monocytogenes serovar 1/2a (strain ATCC BAA-679 / EGD-e).